The sequence spans 493 residues: Transcript termination protein A18 (493 aa).

A Helicase ATP-binding domain is found at 100-256 (MIESKRPLYI…NSIINIAKLS (157 aa)). Residue 113–120 (LACGFGKT) coordinates ATP. The short motif at 206–209 (DESH) is the DESH box element.

The protein belongs to the helicase family. Poxviruses subfamily. As to quaternary structure, interacts with G2. Might be part of a transcription complex composed at least of G2, A18, and H5.

Its subcellular location is the virion. Functionally, DNA helicase which seems to act as a postreplicative transcription termination factor. Involved in ATP-dependent release of nascent RNA. Forms a stable complex with single-stranded DNA, and to a lesser extent RNA. The sequence is that of Transcript termination protein A18 from Vaccinia virus (strain Tian Tan) (VACV).